We begin with the raw amino-acid sequence, 285 residues long: Nucleotide-binding protein HI_1146 (285 aa).

8-15 contributes to the ATP binding site; that stretch reads GRSGAGKS. 56–59 contacts GTP; the sequence is DIRN.

This sequence belongs to the RapZ-like family.

In terms of biological role, displays ATPase and GTPase activities. This chain is Nucleotide-binding protein HI_1146, found in Haemophilus influenzae (strain ATCC 51907 / DSM 11121 / KW20 / Rd).